The following is a 76-amino-acid chain: MKNILFRINELSKKEKVSGLTVDEKQEQQMLRQNYTQTFRGSLDSILLNTKIVDQNGHNVTPAALQDAQIRLKLSK.

It belongs to the UPF0291 family.

It is found in the cytoplasm. The sequence is that of UPF0291 protein BCE_1981 from Bacillus cereus (strain ATCC 10987 / NRS 248).